We begin with the raw amino-acid sequence, 506 residues long: Anaerobic nitric oxide reductase transcription regulator NorR (506 aa).

Asp-57 bears the 4-aspartylphosphate mark. In terms of domain architecture, Sigma-54 factor interaction spans 187 to 416 (MIGLSPAMTQ…LEHAIHRAVV (230 aa)). Residues 215 to 222 (GETGTGKE) and 278 to 287 (ADNGTLFLDE) each bind ATP. Positions 481–500 (WAASARALETDVANLHRLAK) form a DNA-binding region, H-T-H motif.

Its pathway is nitrogen metabolism; nitric oxide reduction. Its function is as follows. Required for the expression of anaerobic nitric oxide (NO) reductase, acts as a transcriptional activator for at least the norVW operon. Activation also requires sigma-54. This is Anaerobic nitric oxide reductase transcription regulator NorR from Salmonella choleraesuis (strain SC-B67).